The chain runs to 516 residues: ADP-ribosylation factor GTPase-activating protein 3 (516 aa).

Positions L10–R126 constitute an Arf-GAP domain. The C4-type zinc-finger motif lies at C25 to C48. The disordered stretch occupies residues A170 to G199. A compositionally biased stretch (polar residues) spans S173–G190. S231 is subject to Phosphoserine. A coiled-coil region spans residues N243–A264. S270, S274, S331, and S370 each carry phosphoserine. The tract at residues T393–A417 is disordered. Phosphoserine is present on residues S428, S451, S453, S455, S457, and S458.

Its subcellular location is the cytoplasm. It localises to the golgi apparatus membrane. GAP activity stimulated by phosphatidylinositol 4,5-bisphosphate (PIP2). GTPase-activating protein (GAP) for ADP ribosylation factor 1 (ARF1). Hydrolysis of ARF1-bound GTP may lead to dissociation of coatomer from Golgi-derived membranes to allow fusion with target membranes. The polypeptide is ADP-ribosylation factor GTPase-activating protein 3 (Pongo abelii (Sumatran orangutan)).